The chain runs to 37 residues: Islet amyloid polypeptide (37 aa).

Residues C2 and C7 are joined by a disulfide bond. Y37 carries the tyrosine amide modification.

Belongs to the calcitonin family. Can form homodimers. Interacts with IDE and INS. Interaction with INS inhibits homodimerization and fibril formation.

The protein localises to the secreted. Amylin/IAPP is a glucoregulatory peptide hormone that plays an important role in the regulation of energy homeostasis. Selectively inhibits insulin-stimulated glucose utilization and glycogen deposition in muscle, while not affecting adipocyte glucose metabolism. IAPP function is mediated by the CALCR-RAMPs (AMYRs) receptor complexes. Amylin can also bind CALCR receptor in the absence of RAMPs, although it is more selective for AMYRs. In Cricetulus griseus (Chinese hamster), this protein is Islet amyloid polypeptide (IAPP).